The chain runs to 157 residues: Spore germination protein GerT (157 aa).

The protein localises to the spore coat. Functionally, involved in spore germination; probably required at the earliest stage of germination. This is Spore germination protein GerT (gerT) from Bacillus subtilis (strain 168).